The sequence spans 66 residues: uncharacterized protein (66 aa).

A run of 2 helical transmembrane segments spans residues 3-23 (LIHV…PFAN) and 34-54 (FILA…AIVY).

It is found in the cell membrane. This is an uncharacterized protein from Bacillus subtilis (strain 168).